A 335-amino-acid chain; its full sequence is Vitamin B12 import system permease protein BtuC (335 aa).

Transmembrane regions (helical) follow at residues 22 to 42 (LLLL…AGDV), 67 to 87 (LAVM…QSLF), 94 to 114 (PGLL…VLLG), 117 to 137 (LLPV…MTFL), 153 to 173 (LLVG…AVYF), 200 to 220 (LVLA…ALNF), 243 to 263 (VLAI…IGFV), 281 to 301 (YLLP…DVVA), and 308 to 328 (AELP…IWLL).

The protein belongs to the binding-protein-dependent transport system permease family. FecCD subfamily. The complex is composed of two ATP-binding proteins (BtuD), two transmembrane proteins (BtuC) and a solute-binding protein (BtuF).

Its subcellular location is the cell inner membrane. Part of the ABC transporter complex BtuCDF involved in vitamin B12 import. Involved in the translocation of the substrate across the membrane. The polypeptide is Vitamin B12 import system permease protein BtuC (Serratia proteamaculans (strain 568)).